The primary structure comprises 211 residues: Holliday junction resolvase RecU (211 aa).

The Mg(2+) site is built by Thr87, Asp89, Asp102, and Gln121.

It belongs to the RecU family. It depends on Mg(2+) as a cofactor.

The protein localises to the cytoplasm. The catalysed reaction is Endonucleolytic cleavage at a junction such as a reciprocal single-stranded crossover between two homologous DNA duplexes (Holliday junction).. Its function is as follows. Endonuclease that resolves Holliday junction intermediates in genetic recombination. Cleaves mobile four-strand junctions by introducing symmetrical nicks in paired strands. Promotes annealing of linear ssDNA with homologous dsDNA. Required for DNA repair, homologous recombination and chromosome segregation. This Limosilactobacillus fermentum (strain NBRC 3956 / LMG 18251) (Lactobacillus fermentum) protein is Holliday junction resolvase RecU.